A 100-amino-acid chain; its full sequence is Urease subunit gamma (100 aa).

This sequence belongs to the urease gamma subunit family. As to quaternary structure, heterotrimer of UreA (gamma), UreB (beta) and UreC (alpha) subunits. Three heterotrimers associate to form the active enzyme.

Its subcellular location is the cytoplasm. It catalyses the reaction urea + 2 H2O + H(+) = hydrogencarbonate + 2 NH4(+). Its pathway is nitrogen metabolism; urea degradation; CO(2) and NH(3) from urea (urease route): step 1/1. The chain is Urease subunit gamma from Mycolicibacterium vanbaalenii (strain DSM 7251 / JCM 13017 / BCRC 16820 / KCTC 9966 / NRRL B-24157 / PYR-1) (Mycobacterium vanbaalenii).